A 473-amino-acid chain; its full sequence is Inactive FRIGIDA-like protein 2 (473 aa).

Coiled coils occupy residues 3 to 35 and 306 to 361; these read AAES…RSLL and SLKV…RATK. The tract at residues 356–384 is disordered; the sequence is RKRATKFNSPANPQQPQEQKVDNKRPRVA. Positions 361–373 are enriched in polar residues; it reads KFNSPANPQQPQE.

Belongs to the Frigida family. As to expression, expressed at low levels throughout the plant, with slightly higher expression in developing seeds and the highest expression in pollen.

Inactive FRIGIDA-like 2 protein. The chain is Inactive FRIGIDA-like protein 2 (FRL2) from Arabidopsis thaliana (Mouse-ear cress).